A 631-amino-acid chain; its full sequence is Sperm-associated antigen 16 protein (631 aa).

Residues 152–267 (DVYTQIMLLE…LQETLKKLQR (116 aa)) are a coiled coil. The tract at residues 266-332 (QRGHSYHGPQ…QPNPNLNVSK (67 aa)) is disordered. Composition is skewed to basic and acidic residues over residues 277 to 287 (KVDHSREKENA) and 295 to 304 (GLREAREQNK). 7 WD repeats span residues 350–389 (LHELPVSCVSMQPHKDILVSCGEDRLWKVLGLPKCNVLLT), 392–431 (GHTDWLSDCCFHPSGDKLATSSGDTTVKLWDLCKGDCILT), 434–473 (GHSRAVWSCTWHSCGNFVASSSLDKTSKIWDVNSERCRCT), 476–515 (GHTDSVNSIEFFPFSNTLLTSSADKTLSIWDARTGICEQS), 518–557 (GHMHSINDAIFDPRGHMIASCDACGVTKLWDFRKLLPIVS), 560–600 (IGPS…HKLM), and 601–630 (GHENEAHTVVFSHDGEILFSGGSDGTVRTW).

Interacts with SPAG6 and STK36. In terms of processing, phosphorylated by TSSK2. As to expression, isoform 1 is detected in testis. Isoform 4 is detected in testis and brain, and at lower levels in kidney, heart, pancreas, thyroid, ovary, adrenal gland, spinal cord, trachea and liver.

Its subcellular location is the cytoplasm. The protein localises to the cytoskeleton. It is found in the flagellum axoneme. The protein resides in the cilium axoneme. It localises to the cell projection. Its subcellular location is the cilium. The protein localises to the flagellum. In terms of biological role, necessary for sperm flagellar function. Plays a role in motile ciliogenesis. May help to recruit STK36 to the cilium or apical surface of the cell to initiate subsequent steps of construction of the central pair apparatus of motile cilia. This Homo sapiens (Human) protein is Sperm-associated antigen 16 protein (SPAG16).